The sequence spans 122 residues: ILPEFLSLVKHGKIRMEFRAVVKEITEDELIFSVDGKETRIKNDFVFAMTGYHPDHSFLQKMGVKIDAESGRPFFNEETMETNEEGIFIAGVIAAGNNANEIFIENGRFHGGLIAAEIAKRI.

The protein to B.subtilis YpdA.

This is an uncharacterized protein from Bacillus licheniformis.